We begin with the raw amino-acid sequence, 408 residues long: Peptidase T (408 aa).

His78 is a binding site for Zn(2+). Asp80 is a catalytic residue. Asp140 is a binding site for Zn(2+). Glu174 functions as the Proton acceptor in the catalytic mechanism. 3 residues coordinate Zn(2+): Glu175, Asp197, and His379.

This sequence belongs to the peptidase M20B family. The cofactor is Zn(2+).

It is found in the cytoplasm. The enzyme catalyses Release of the N-terminal residue from a tripeptide.. Its function is as follows. Cleaves the N-terminal amino acid of tripeptides. The sequence is that of Peptidase T from Staphylococcus aureus (strain Mu3 / ATCC 700698).